The primary structure comprises 472 residues: Levansucrase (472 aa).

Residues 1–29 (MNIKKIVKQATVLTFTTALLAGGATQAFA) form the signal peptide. Residues tryptophan 85, aspartate 86, and serine 164 each coordinate sucrose. The active-site Nucleophile is the aspartate 86. A Ca(2+)-binding site is contributed by aspartate 241. Sucrose is bound by residues arginine 246 and aspartate 247. Ca(2+)-binding residues include glutamine 272, leucine 308, asparagine 310, and aspartate 339. Glutamate 340 is a binding site for sucrose. Glutamate 342 functions as the Proton donor/acceptor in the catalytic mechanism. Arginine 360 is a sucrose binding site.

This sequence belongs to the glycosyl hydrolase 68 family.

It localises to the secreted. The catalysed reaction is [6)-beta-D-fructofuranosyl-(2-&gt;](n) alpha-D-glucopyranoside + sucrose = [6)-beta-D-fructofuranosyl-(2-&gt;](n+1) alpha-D-glucopyranoside + D-glucose. With respect to regulation, ca(2+) may play an important structural role and promote stability of levansucrase. Catalyzes the synthesis of levan, a fructose polymer, by transferring the fructosyl moiety from sucrose to a growing acceptor molecule. Also displays sucrose hydrolase activity. The sequence is that of Levansucrase from Bacillus amyloliquefaciens (Bacillus velezensis).